The chain runs to 338 residues: Lipoate-protein ligase A (338 aa).

The region spanning 29–216 (PATQRVLFLW…AFFAHYGERV (188 aa)) is the BPL/LPL catalytic domain. ATP is bound by residues Arg71, 76–79 (GAVF), and Lys134. A (R)-lipoate-binding site is contributed by Lys134.

It belongs to the LplA family. In terms of assembly, monomer.

The protein resides in the cytoplasm. The catalysed reaction is L-lysyl-[lipoyl-carrier protein] + (R)-lipoate + ATP = N(6)-[(R)-lipoyl]-L-lysyl-[lipoyl-carrier protein] + AMP + diphosphate + H(+). It functions in the pathway protein modification; protein lipoylation via exogenous pathway; protein N(6)-(lipoyl)lysine from lipoate: step 1/2. It participates in protein modification; protein lipoylation via exogenous pathway; protein N(6)-(lipoyl)lysine from lipoate: step 2/2. Functionally, catalyzes both the ATP-dependent activation of exogenously supplied lipoate to lipoyl-AMP and the transfer of the activated lipoyl onto the lipoyl domains of lipoate-dependent enzymes. The sequence is that of Lipoate-protein ligase A from Escherichia coli O6:K15:H31 (strain 536 / UPEC).